Reading from the N-terminus, the 119-residue chain is Large ribosomal subunit protein bL20c (119 aa).

This sequence belongs to the bacterial ribosomal protein bL20 family.

The protein resides in the plastid. Its subcellular location is the chloroplast. Its function is as follows. Binds directly to 23S ribosomal RNA and is necessary for the in vitro assembly process of the 50S ribosomal subunit. It is not involved in the protein synthesizing functions of that subunit. The sequence is that of Large ribosomal subunit protein bL20c from Saccharum officinarum (Sugarcane).